Reading from the N-terminus, the 287-residue chain is Mitochondrial glycine transporter A (287 aa).

Solcar repeat units follow at residues 7–97, 104–188, and 198–282; these read HPAV…LKQR, PGPL…TKHL, and YAPV…LMAQ. The next 6 membrane-spanning stretches (helical) occupy residues 13 to 38, 72 to 98, 110 to 135, 163 to 186, 202 to 228, and 257 to 275; these read FMCG…TRLQ, GVSP…KQRY, VLLG…TRFE, GLMA…SQTK, ANFS…KTHI, and GAVP…AWTV.

Belongs to the mitochondrial carrier (TC 2.A.29) family. SLC25A38 subfamily. At 24 hours post-fertilization, expressed predominantly in posterior blood island, posterior cardinal vein and circulating blood, as well as in somites, brain and retina. At 34 hours post-fertilization, becomes restricted to posterior blood island and circulating blood.

The protein localises to the mitochondrion inner membrane. The catalysed reaction is glycine(in) = glycine(out). In terms of biological role, mitochondrial glycine transporter that imports glycine into the mitochondrial matrix. Plays an important role in providing glycine for the first enzymatic step in heme biosynthesis, the condensation of glycine with succinyl-CoA to produce 5-aminolevulinate (ALA) in the mitochondrial matrix. Required during erythropoiesis. Its function is as follows. May play a role as pro-apoptotic protein that induces caspase-dependent apoptosis. In Danio rerio (Zebrafish), this protein is Mitochondrial glycine transporter A (slc25a38a).